The sequence spans 230 residues: NADH-quinone oxidoreductase subunit 9 (230 aa).

4Fe-4S ferredoxin-type domains lie at 60–93 (GRPV…MQAK) and 104–133 (AWFE…MSKE). Residues Cys73, Cys76, Cys79, Cys83, Cys113, Cys116, Cys119, and Cys123 each contribute to the [4Fe-4S] cluster site.

Belongs to the complex I 23 kDa subunit family. As to quaternary structure, NDH-1 is composed of 14 different subunits. Subunits Nqo7-14 constitute the membrane sector of the complex. The cofactor is [4Fe-4S] cluster.

The protein resides in the cell inner membrane. The enzyme catalyses a quinone + NADH + 5 H(+)(in) = a quinol + NAD(+) + 4 H(+)(out). NDH-1 shuttles electrons from NADH, via FMN and iron-sulfur (Fe-S) centers, to quinones in the respiratory chain. The immediate electron acceptor for the enzyme in this species is believed to be menaquinone. Couples the redox reaction to proton translocation (for every two electrons transferred, four hydrogen ions are translocated across the cytoplasmic membrane), and thus conserves the redox energy in a proton gradient. This is NADH-quinone oxidoreductase subunit 9 (nqo9) from Rhodothermus marinus (Rhodothermus obamensis).